Here is a 99-residue protein sequence, read N- to C-terminus: MKVSAGILCLLLVAATFGTQVLAQPDSVSTPITCCFSVINGKIPFKKLDSYTRITNSQCPQEAVIFKTKADRDVCADPKQKWVQTSIRLLDQKSRTPKP.

Residues 1–23 form the signal peptide; it reads MKVSAGILCLLLVAATFGTQVLA. A Pyrrolidone carboxylic acid modification is found at Gln-24. Disulfide bonds link Cys-34–Cys-59 and Cys-35–Cys-75.

The protein belongs to the intercrine beta (chemokine CC) family. Monomer or homodimer; in equilibrium.

The protein resides in the secreted. Chemotactic factor that attracts monocytes. This protein can bind heparin. The sequence is that of C-C motif chemokine 8 (CCL8) from Bos taurus (Bovine).